The following is a 254-amino-acid chain: MIIVISPAKSQNFEPIKTDYQFTQPIFKQQIIKLINTLKHYEVEEIEKLMKISPKLAEEVFAKHNSFNPNKYDNSNAKAAIFTFSGDVYKGLEADTLDNKTIEYAQNHLLMLSGLYGLVRPLDLIQAYRLEMGTNIKIDGKILHKYWQDKITTQLNEYFSQQQNKILINLASNEYSQAIDKKSLAAKWLDIDFKENKAGAYKTIGIHAKKARGLMTRYILENRIENVSDIKKFNVAGYQFNPDFSDENLLCFTR.

This sequence belongs to the UPF0246 family.

The polypeptide is UPF0246 protein FTN_1542 (Francisella tularensis subsp. novicida (strain U112)).